Here is a 229-residue protein sequence, read N- to C-terminus: Large ribosomal subunit protein uL1 (229 aa).

It belongs to the universal ribosomal protein uL1 family. In terms of assembly, part of the 50S ribosomal subunit.

In terms of biological role, binds directly to 23S rRNA. The L1 stalk is quite mobile in the ribosome, and is involved in E site tRNA release. Its function is as follows. Protein L1 is also a translational repressor protein, it controls the translation of the L11 operon by binding to its mRNA. The polypeptide is Large ribosomal subunit protein uL1 (Lactococcus lactis subsp. lactis (strain IL1403) (Streptococcus lactis)).